We begin with the raw amino-acid sequence, 420 residues long: PHO85 cyclin-6 (420 aa).

Disordered regions lie at residues methionine 1–phenylalanine 82, glutamine 134–asparagine 155, and valine 268–arginine 321. Residues serine 7 to serine 22 show a composition bias toward low complexity. At serine 61 the chain carries Phosphoserine. The span at glutamine 134–threonine 143 shows a compositional bias: polar residues. Basic and acidic residues predominate over residues alanine 277–aspartate 296. Phosphoserine is present on residues serine 281 and serine 312. Over residues asparagine 307 to asparagine 316 the composition is skewed to acidic residues. At threonine 317 the chain carries Phosphothreonine.

Belongs to the cyclin family. PHO80 subfamily. In terms of assembly, forms a cyclin-CDK complex with PHO85. Interacts with the substrate protein YJL084C. Interacts with elongin-C, which stabilizes PCL6. Interacts with the CDK inhibitor (CKI) PHO81.

Its subcellular location is the cytoplasm. It is found in the nucleus. In terms of biological role, cyclin partner of the cyclin-dependent kinase (CDK) PHO85. Together with cyclin PCL7, controls glycogen phosphorylase and glycogen synthase activities in response to nutrient availablility. The PCL6-PHO85 cyclin-CDK holoenzyme has GLC8 kinase activity and phosphorylates and inactivates the phosphatase PP1-2 inhibitor GLC8, causing activation of PP1-2, which then dephosphorylates and activates glycogen phosphorylase. PCL6-PHO85 also phosphorylates YJL084C. This chain is PHO85 cyclin-6 (PCL6), found in Saccharomyces cerevisiae (strain ATCC 204508 / S288c) (Baker's yeast).